The following is a 149-amino-acid chain: Glutamyl-tRNA(Gln) amidotransferase subunit C, mitochondrial (149 aa).

The protein belongs to the GatC family. In terms of assembly, subunit of the heterotrimeric GatCAB amidotransferase (AdT) complex, composed of A, B and C subunits.

The protein localises to the mitochondrion. The enzyme catalyses L-glutamyl-tRNA(Gln) + L-glutamine + ATP + H2O = L-glutaminyl-tRNA(Gln) + L-glutamate + ADP + phosphate + H(+). Allows the formation of correctly charged Gln-tRNA(Gln) through the transamidation of misacylated Glu-tRNA(Gln) in the mitochondria. The reaction takes place in the presence of glutamine and ATP through an activated gamma-phospho-Glu-tRNA(Gln). In Trichoplax adhaerens (Trichoplax reptans), this protein is Glutamyl-tRNA(Gln) amidotransferase subunit C, mitochondrial.